The following is a 258-amino-acid chain: Acetylglutamate kinase (258 aa).

Residues Gly44–Gly45, Arg66, and Asn158 each bind substrate. ATP is bound by residues Asp181–Leu186 and Ile209–Thr211.

This sequence belongs to the acetylglutamate kinase family. ArgB subfamily. In terms of assembly, homodimer.

It localises to the cytoplasm. It catalyses the reaction N-acetyl-L-glutamate + ATP = N-acetyl-L-glutamyl 5-phosphate + ADP. It participates in amino-acid biosynthesis; L-arginine biosynthesis; N(2)-acetyl-L-ornithine from L-glutamate: step 2/4. Its function is as follows. Catalyzes the ATP-dependent phosphorylation of N-acetyl-L-glutamate. The sequence is that of Acetylglutamate kinase from Escherichia coli O157:H7.